The sequence spans 209 residues: Iron-sulfur cluster assembly 2 homolog, mitochondrial (209 aa).

Residues 1 to 27 constitute a mitochondrion transit peptide; the sequence is MIRSIFKKNSSLPYFLKRSFITKPHSI. Residues C134, C199, and C201 each contribute to the Fe cation site.

This sequence belongs to the HesB/IscA family. The cofactor is Fe cation.

Its subcellular location is the mitochondrion. Functionally, involved in the maturation of mitochondrial 4Fe-4S proteins functioning late in the iron-sulfur cluster assembly pathway. May be involved in the binding of an intermediate of Fe/S cluster assembly. The protein is Iron-sulfur cluster assembly 2 homolog, mitochondrial (isca2) of Dictyostelium discoideum (Social amoeba).